The following is a 200-amino-acid chain: Holliday junction branch migration complex subunit RuvA (200 aa).

Positions 1 to 63 are domain I; it reads MIALVQGRVA…EDSLTLFGFA (63 aa). A domain II region spans residues 64 to 138; the sequence is DADERDVFEL…DRLGPAQGAA (75 aa). Residues 138-142 form a flexible linker region; the sequence is APAAP. The tract at residues 143–200 is domain III; the sequence is VAVDDGADVVDALVGLGWPVRQAQDAVRGVLEDADGTAPDAAGLLRAALRSLAGDARG.

This sequence belongs to the RuvA family. Homotetramer. Forms an RuvA(8)-RuvB(12)-Holliday junction (HJ) complex. HJ DNA is sandwiched between 2 RuvA tetramers; dsDNA enters through RuvA and exits via RuvB. An RuvB hexamer assembles on each DNA strand where it exits the tetramer. Each RuvB hexamer is contacted by two RuvA subunits (via domain III) on 2 adjacent RuvB subunits; this complex drives branch migration. In the full resolvosome a probable DNA-RuvA(4)-RuvB(12)-RuvC(2) complex forms which resolves the HJ.

It localises to the cytoplasm. In terms of biological role, the RuvA-RuvB-RuvC complex processes Holliday junction (HJ) DNA during genetic recombination and DNA repair, while the RuvA-RuvB complex plays an important role in the rescue of blocked DNA replication forks via replication fork reversal (RFR). RuvA specifically binds to HJ cruciform DNA, conferring on it an open structure. The RuvB hexamer acts as an ATP-dependent pump, pulling dsDNA into and through the RuvAB complex. HJ branch migration allows RuvC to scan DNA until it finds its consensus sequence, where it cleaves and resolves the cruciform DNA. This Beutenbergia cavernae (strain ATCC BAA-8 / DSM 12333 / CCUG 43141 / JCM 11478 / NBRC 16432 / NCIMB 13614 / HKI 0122) protein is Holliday junction branch migration complex subunit RuvA.